The following is a 360-amino-acid chain: Mannonate dehydratase (360 aa).

The protein belongs to the mannonate dehydratase family. Fe(2+) serves as cofactor. Mn(2+) is required as a cofactor.

It carries out the reaction D-mannonate = 2-dehydro-3-deoxy-D-gluconate + H2O. It functions in the pathway carbohydrate metabolism; pentose and glucuronate interconversion. In terms of biological role, catalyzes the dehydration of D-mannonate. This Thermotoga sp. (strain RQ2) protein is Mannonate dehydratase.